Here is a 277-residue protein sequence, read N- to C-terminus: Large ribosomal subunit protein uL2 (277 aa).

A disordered region spans residues 222 to 258; the sequence is GSVMNPCDHPHGGGEGRSPIGRPSPVTPWGKPALGYK.

It belongs to the universal ribosomal protein uL2 family. As to quaternary structure, part of the 50S ribosomal subunit. Forms a bridge to the 30S subunit in the 70S ribosome.

Its function is as follows. One of the primary rRNA binding proteins. Required for association of the 30S and 50S subunits to form the 70S ribosome, for tRNA binding and peptide bond formation. It has been suggested to have peptidyltransferase activity; this is somewhat controversial. Makes several contacts with the 16S rRNA in the 70S ribosome. The polypeptide is Large ribosomal subunit protein uL2 (Clostridium perfringens (strain 13 / Type A)).